A 195-amino-acid chain; its full sequence is Cytochrome c oxidase assembly protein CtaG (195 aa).

Topologically, residues 1 to 9 (MALNGPQKT) are cytoplasmic. A helical; Signal-anchor for type II membrane protein membrane pass occupies residues 10 to 30 (VVQLVGVVVLMGGLAWASVPF). Over 31–195 (YDWFCRVTGF…DTSGAETELN (165 aa)) the chain is Periplasmic.

This sequence belongs to the COX11/CtaG family.

Its subcellular location is the cell inner membrane. Its function is as follows. Exerts its effect at some terminal stage of cytochrome c oxidase synthesis, probably by being involved in the insertion of the copper B into subunit I. The chain is Cytochrome c oxidase assembly protein CtaG from Ruegeria sp. (strain TM1040) (Silicibacter sp.).